We begin with the raw amino-acid sequence, 444 residues long: Methylenetetrahydrofolate--tRNA-(uracil-5-)-methyltransferase TrmFO (444 aa).

9–14 (GAGMAG) is a binding site for FAD.

It belongs to the MnmG family. TrmFO subfamily. FAD is required as a cofactor.

Its subcellular location is the cytoplasm. The enzyme catalyses uridine(54) in tRNA + (6R)-5,10-methylene-5,6,7,8-tetrahydrofolate + NADH + H(+) = 5-methyluridine(54) in tRNA + (6S)-5,6,7,8-tetrahydrofolate + NAD(+). The catalysed reaction is uridine(54) in tRNA + (6R)-5,10-methylene-5,6,7,8-tetrahydrofolate + NADPH + H(+) = 5-methyluridine(54) in tRNA + (6S)-5,6,7,8-tetrahydrofolate + NADP(+). In terms of biological role, catalyzes the folate-dependent formation of 5-methyl-uridine at position 54 (M-5-U54) in all tRNAs. This is Methylenetetrahydrofolate--tRNA-(uracil-5-)-methyltransferase TrmFO from Cereibacter sphaeroides (strain KD131 / KCTC 12085) (Rhodobacter sphaeroides).